Here is a 477-residue protein sequence, read N- to C-terminus: Pentatricopeptide repeat-containing protein At5g47360 (477 aa).

PPR repeat units lie at residues 129–163 (NVKT…NVCA), 164–198 (DTVA…GLYP), 199–233 (DVIT…DCVL), 234–264 (NSVT…MEKE), 273–307 (NAVT…GCMP), 308–343 (NRVT…GGVS), 344–378 (LSEC…GVRP), 379–413 (DGLA…DVKS), and 416–450 (DSDI…KMRL).

The protein belongs to the PPR family. P subfamily.

In Arabidopsis thaliana (Mouse-ear cress), this protein is Pentatricopeptide repeat-containing protein At5g47360.